The following is an 86-amino-acid chain: Small ribosomal subunit protein bS16 (86 aa).

This sequence belongs to the bacterial ribosomal protein bS16 family.

In Borreliella afzelii (strain PKo) (Borrelia afzelii), this protein is Small ribosomal subunit protein bS16.